The chain runs to 134 residues: Ribosome-binding factor A (134 aa).

It belongs to the RbfA family. In terms of assembly, monomer. Binds 30S ribosomal subunits, but not 50S ribosomal subunits or 70S ribosomes.

Its subcellular location is the cytoplasm. Functionally, one of several proteins that assist in the late maturation steps of the functional core of the 30S ribosomal subunit. Associates with free 30S ribosomal subunits (but not with 30S subunits that are part of 70S ribosomes or polysomes). Required for efficient processing of 16S rRNA. May interact with the 5'-terminal helix region of 16S rRNA. The sequence is that of Ribosome-binding factor A from Baumannia cicadellinicola subsp. Homalodisca coagulata.